Consider the following 259-residue polypeptide: MQQMVPASGYDRAITIFSPEGRLYQVEYAREAVRRGTTAVGIKCKDGVVLAVDRRITSKLIDVSSIEKIFQIDDHIVAATSGLVADARVLIDRARLEAQMNRISYGEAITVEALAKKICDIKQAYTQHGGARPFGLALLITGIDRHSARLFETDPSGALIEYKATAIGSGRPIAMEVLESKYDENMTVNEGMELALYALSKTTEELKPENIDMAIVKDSGKLVEKISVDEIEKIVKAVYKKVEAEEAEAEKNKGEEDIE.

This sequence belongs to the peptidase T1A family. In terms of assembly, the 20S proteasome core is composed of 14 alpha and 14 beta subunits that assemble into four stacked heptameric rings, resulting in a barrel-shaped structure. The two inner rings, each composed of seven catalytic beta subunits, are sandwiched by two outer rings, each composed of seven alpha subunits. The catalytic chamber with the active sites is on the inside of the barrel. Has a gated structure, the ends of the cylinder being occluded by the N-termini of the alpha-subunits. Is capped at one or both ends by the proteasome regulatory ATPase, PAN.

It is found in the cytoplasm. With respect to regulation, the formation of the proteasomal ATPase PAN-20S proteasome complex, via the docking of the C-termini of PAN into the intersubunit pockets in the alpha-rings, triggers opening of the gate for substrate entry. Interconversion between the open-gate and close-gate conformations leads to a dynamic regulation of the 20S proteasome proteolysis activity. Component of the proteasome core, a large protease complex with broad specificity involved in protein degradation. This Methanococcus maripaludis (strain C7 / ATCC BAA-1331) protein is Proteasome subunit alpha.